Here is a 399-residue protein sequence, read N- to C-terminus: Centrosomal protein 43 (399 aa).

The LisH domain occupies 70 to 102 (DGRLVASLVAEFLQFFNLDFTLAVFHPETSTIQ). 2 disordered regions span residues 142 to 216 (PASV…SKSS) and 236 to 311 (DARD…KRGS). Phosphoserine is present on residues serine 152 and serine 160. Residues 163-172 (GKSSANSTPS) are compositionally biased toward polar residues. Phosphothreonine is present on threonine 170. A compositionally biased stretch (basic residues) spans 175-186 (PRYKGQGKKKTI). Residues 197-216 (SETSQSEPSVSLSESKSKSS) are compositionally biased toward low complexity. Position 202 is a phosphoserine (serine 202). Residues 246-256 (DGDDVEGDSFF) show a composition bias toward acidic residues. The segment covering 259–275 (PIPKPEKTYGWRAEPRK) has biased composition (basic and acidic residues). The span at 290-302 (RSGLSSLAGAPSL) shows a compositional bias: low complexity. Phosphoserine is present on residues serine 301 and serine 326. The disordered stretch occupies residues 328–354 (GLGTGEDEDYADDFNSASHRSEKSELS). Tyrosine 337 carries the post-translational modification Phosphotyrosine.

This sequence belongs to the CEP43 family. As to quaternary structure, homodimer. Part of a ternary complex that contains CEP350, CEP43 and MAPRE1. Interacts directly with CEP350 and MAPRE1. Interacts with CEP19. Interacts (via N-terminus) with CEP350 (via C-terminus).

The protein resides in the cytoplasm. Its subcellular location is the cytoskeleton. It is found in the microtubule organizing center. It localises to the centrosome. The protein localises to the centriole. The protein resides in the cilium basal body. Functionally, required for anchoring microtubules to the centrosomes. Required for ciliation. The chain is Centrosomal protein 43 from Mus musculus (Mouse).